A 223-amino-acid chain; its full sequence is Glutathione S-transferase U6 (223 aa).

The 80-residue stretch at 5–84 (EEVKLLGIWA…YIDETWKHNP (80 aa)) folds into the GST N-terminal domain. Glutathione-binding positions include 15–16 (SP), 41–42 (NK), 55–56 (KI), and 68–69 (ES). Residues 89–216 (DPFQRSKARV…EKHIEHMNNM (128 aa)) enclose the GST C-terminal domain. Phosphothreonine is present on threonine 150.

The protein belongs to the GST superfamily. Tau family.

It is found in the cytoplasm. It localises to the cytosol. It catalyses the reaction RX + glutathione = an S-substituted glutathione + a halide anion + H(+). Functionally, may be involved in the conjugation of reduced glutathione to a wide number of exogenous and endogenous hydrophobic electrophiles and have a detoxification role against certain herbicides. The protein is Glutathione S-transferase U6 (GSTU6) of Arabidopsis thaliana (Mouse-ear cress).